The sequence spans 147 residues: Flagellar assembly factor FliW (147 aa).

The protein belongs to the FliW family. As to quaternary structure, interacts with translational regulator CsrA and flagellin(s).

It localises to the cytoplasm. Acts as an anti-CsrA protein, binds CsrA and prevents it from repressing translation of its target genes, one of which is flagellin. Binds to flagellin and participates in the assembly of the flagellum. This is Flagellar assembly factor FliW from Chromobacterium violaceum (strain ATCC 12472 / DSM 30191 / JCM 1249 / CCUG 213 / NBRC 12614 / NCIMB 9131 / NCTC 9757 / MK).